Reading from the N-terminus, the 232-residue chain is 26S proteasome non-ATPase regulatory subunit 10 (232 aa).

ANK repeat units lie at residues 45–75, 79–108, 112–141, 144–173, 177–206, and 210–232; these read DERTPLHWAAAKGQISVAQYLMDNCKCSPNT, GGWTPLTSATSAGHTHMVKLLLEFGADPNT, SKRTPLHYASSKGRSDIVDLLLTHGAKNRK, TGSAPIHRASSNGSVATVERLLKGEANINS, EGDTPLHIAAEYNHEDVVECLLKHGADTTI, and DSKTPIDMSSSQTIKYLIKEFKK.

In terms of biological role, acts as a chaperone during the assembly of the 26S proteasome, specifically of the 19S regulatory complex (RC). The protein is 26S proteasome non-ATPase regulatory subunit 10 (psmD10) of Dictyostelium discoideum (Social amoeba).